An 873-amino-acid chain; its full sequence is Zinc fingers and homeoboxes protein 1 (873 aa).

Residues 24-63 (LISDLDEGPPVLTPVENTRAESISSDEEVHESVDSDNQQN) form a disordered region. The residue at position 36 (Thr-36) is a Phosphothreonine. Phosphoserine occurs at positions 45, 47, and 48. 2 C2H2-type zinc fingers span residues 70–93 (YECK…DSEH) and 102–125 (YVCV…LKYH). Residue Lys-159 forms a Glycyl lysine isopeptide (Lys-Gly) (interchain with G-Cter in SUMO2) linkage. Positions 200–236 (HNSVEDVPEEKENEIKPDREEIVENPSSSASESNTST) are disordered. At Ser-202 the chain carries Phosphoserine. A compositionally biased stretch (basic and acidic residues) spans 212–221 (NEIKPDREEI). Positions 223 to 236 (ENPSSSASESNTST) are enriched in low complexity. Residues 272–432 (NSNLIPKVLI…QNNIQKSQVP (161 aa)) form a required for dimerization region. Residues 272–564 (NSNLIPKVLI…AQPKQSWNPF (293 aa)) form a required for interaction with NFYA region. The homeobox 1 DNA-binding region spans 284-346 (NSIPTYNAAL…LKHGVSWTPE (63 aa)). Residues Lys-441, Lys-454, Lys-485, and Lys-629 each participate in a glycyl lysine isopeptide (Lys-Gly) (interchain with G-Cter in SUMO2) cross-link. DNA-binding regions (homeobox) lie at residues 464–526 (SFGI…KSNQ) and 569–630 (PQKF…EEKM). 2 disordered regions span residues 626-667 (KEEK…ICKK) and 732-769 (SSMN…INNW). Ser-648 is subject to Phosphoserine. The homeobox 4 DNA-binding region spans 660-722 (STGKICKKTP…YAWKNGNLKW (63 aa)). The required for nuclear localization stretch occupies residues 734–768 (MNGLSSLRKRGRGRPKGRGRGRPRGRPRGSKRINN). Basic residues predominate over residues 740–764 (LRKRGRGRPKGRGRGRPRGRPRGSK). Position 774 is a phosphoserine (Ser-774). A DNA-binding region (homeobox 5) is located at residues 777–832 (KFKTGTAILKDYYLKHKFLNEQDLDELVNKSHMGYEQVREWFAERQRRSELGIELF). Positions 829 to 873 (IELFEENEEEDEVIDDQEEDEEETDDSDTWEPPRHVKRKLSKSDD) are disordered. The segment covering 831 to 857 (LFEENEEEDEVIDDQEEDEEETDDSDT) has biased composition (acidic residues). Residues 831–873 (LFEENEEEDEVIDDQEEDEEETDDSDTWEPPRHVKRKLSKSDD) are required for repressor activity. A compositionally biased stretch (basic residues) spans 863–873 (HVKRKLSKSDD).

The protein belongs to the ZHX family. In terms of assembly, forms homodimers. Heterodimer (via HD1 domain) with ZHX2 (via HD1 domain). Also forms a heterodimer with ZHX3 which is a prerequisite for repressor activity. Interacts with ATF7IP and NFYA. Interacts (via homeobox domains) with DNMT3B (via PWWP domain).

Its subcellular location is the nucleus. In terms of biological role, acts as a transcriptional repressor. Increases DNMT3B-mediated repressive transcriptional activity when DNMT3B is tethered to DNA. May link molecule between DNMT3B and other co-repressor proteins. The protein is Zinc fingers and homeoboxes protein 1 (ZHX1) of Pan troglodytes (Chimpanzee).